The following is a 211-amino-acid chain: MNGVATKSALNLARSLYEAGIKNEGVLKALADTPREMFLDAALGHKAYENTALPIGQGQTISQPYIVARMTELLLENAPKRVLEIGTGSGYQAAILAKLVPELCTVERIKSLQIQARLRLKRLDLHNISFKYGDGWKGWANKGPFDSIMVTAAASTIPEALLTQLADKGVLVIPVGDESQQLLKVVRHGDTFSSEVVEMVRFVPLVNGELA.

Ser62 is a catalytic residue.

Belongs to the methyltransferase superfamily. L-isoaspartyl/D-aspartyl protein methyltransferase family.

The protein localises to the cytoplasm. The catalysed reaction is [protein]-L-isoaspartate + S-adenosyl-L-methionine = [protein]-L-isoaspartate alpha-methyl ester + S-adenosyl-L-homocysteine. Its function is as follows. Catalyzes the methyl esterification of L-isoaspartyl residues in peptides and proteins that result from spontaneous decomposition of normal L-aspartyl and L-asparaginyl residues. It plays a role in the repair and/or degradation of damaged proteins. The chain is Protein-L-isoaspartate O-methyltransferase 1 from Shewanella sediminis (strain HAW-EB3).